A 392-amino-acid chain; its full sequence is Chaperone protein DnaJ (392 aa).

One can recognise a J domain in the interval Asp2 to Gly67. Residues Gly149 to Lys227 form a CR-type zinc finger. Positions 162, 165, 179, 182, 201, 204, 215, and 218 each coordinate Zn(2+). CXXCXGXG motif repeat units lie at residues Cys162 to Gly169, Cys179 to Gly186, Cys201 to Gly208, and Cys215 to Gly222.

Belongs to the DnaJ family. In terms of assembly, homodimer. It depends on Zn(2+) as a cofactor.

It localises to the cytoplasm. Functionally, participates actively in the response to hyperosmotic and heat shock by preventing the aggregation of stress-denatured proteins and by disaggregating proteins, also in an autonomous, DnaK-independent fashion. Unfolded proteins bind initially to DnaJ; upon interaction with the DnaJ-bound protein, DnaK hydrolyzes its bound ATP, resulting in the formation of a stable complex. GrpE releases ADP from DnaK; ATP binding to DnaK triggers the release of the substrate protein, thus completing the reaction cycle. Several rounds of ATP-dependent interactions between DnaJ, DnaK and GrpE are required for fully efficient folding. Also involved, together with DnaK and GrpE, in the DNA replication of plasmids through activation of initiation proteins. The polypeptide is Chaperone protein DnaJ (Chlamydia muridarum (strain MoPn / Nigg)).